Consider the following 517-residue polypeptide: Probable G-protein coupled receptor Mth-like 4 (517 aa).

The N-terminal stretch at 1 to 18 (MRILLIAVLFLLMPKSNA) is a signal peptide. Topologically, residues 19–212 (EIPGCDFFDT…LSSEHSRTWK (194 aa)) are extracellular. Disulfide bonds link cysteine 23-cysteine 77, cysteine 79-cysteine 84, cysteine 88-cysteine 183, cysteine 89-cysteine 100, and cysteine 145-cysteine 201. Asparagine 39 is a glycosylation site (N-linked (GlcNAc...) asparagine). N-linked (GlcNAc...) asparagine glycans are attached at residues asparagine 117 and asparagine 165. The chain crosses the membrane as a helical span at residues 213–233 (TVAIVISLICIILTISVYLYV). At 234 to 242 (EKLRNLHGK) the chain is on the cytoplasmic side. The chain crosses the membrane as a helical span at residues 243 to 263 (CFICYLASLFLGYFFLVLNVW). Over 264-272 (KYSSGFCVT) the chain is Extracellular. Residues 273 to 293 (AGFLGYFSVMAAFFWLSVIGI) form a helical membrane-spanning segment. Residues 294–319 (HLRIKFSLASNCLHRLLPENPFRAYN) are Cytoplasmic-facing. The chain crosses the membrane as a helical span at residues 320–340 (LYAWGIPLIMTAITYTADQVV). Topologically, residues 341-363 (KNEKLRPRVGVGKNCWIYTGDMT) are extracellular. A helical membrane pass occupies residues 364–384 (VMIYFYGPMLLLIAFNIIMFV). Topologically, residues 385 to 414 (LSAIYIYNIKKNVKGLVHKQQTNQQINDQQ) are cytoplasmic. The chain crosses the membrane as a helical span at residues 415-435 (MFAIFLRLFILMGLSWSFEIL). Topologically, residues 436–459 (SFLLTKQQAWARALMVADYFNWSQ) are extracellular. N-linked (GlcNAc...) asparagine glycosylation occurs at asparagine 456. The chain crosses the membrane as a helical span at residues 460-480 (GTIIFVLFILKPSILKLIIAG). Over 481–517 (GRQNLPGSHHNSRSKAARYNSTHTACEGSIADPNAYC) the chain is Cytoplasmic.

It belongs to the G-protein coupled receptor 2 family. Mth subfamily.

The protein resides in the cell membrane. In Drosophila melanogaster (Fruit fly), this protein is Probable G-protein coupled receptor Mth-like 4 (mthl4).